Reading from the N-terminus, the 957-residue chain is SLIT and NTRK-like protein 5 (957 aa).

The N-terminal stretch at 1–40 is a signal peptide; that stretch reads MHVCCPPVTLEQDLHRKMHSWMLQTLAFAVTSLVLSCAET. Over 41–664 the chain is Extracellular; that stretch reads IDYYGEICDN…GTGASSVPLS (624 aa). 6 LRR repeats span residues 82–103, 106–127, 130–151, 154–175, 178–199, and 201–222; these read PIYHLLLSGNLLSRLYPNEFVN, GASILHLGSNVIQDIETGAFHG, GLRRLHLNNNKLELLRDDTFLG, NLEYLQVDYNYISVIEPNAFGK, MLQVLILNDNLLSGLPNNLFRF, and PLTHLDLRGNRLKLLPYVGLLQ. Asparagine 103 is a glycosylation site (N-linked (GlcNAc...) asparagine). The region spanning 235–286 is the LRRCT 1 domain; sequence NPWNCSCELISLKDWLDSISYSALVGDVVCETPFRLHGRDLDEVSKQELCPR. Residues 317–358 form a disordered region; it reads ATSSSAVYKPPLKPPKGTRQPNKPRVRPTSRQPSKDLGYSNY. Residues 365–407 form the LRRNT domain; sequence QTKSPVPLECPTACTCNLQISDLGLNVNCQERKIESIAELQPK. 6 LRR repeats span residues 410 to 431, 434 to 455, 458 to 479, 482 to 503, 506 to 527, and 529 to 550; these read NPKKMYLTENYITVVRRTDFLE, GLDLLHLGNNRISMIQDRAFGD, NLRRLYLNGNRIERLSPELFYG, SLQYLFLQYNLIREIQAGTFDP, NLQLLFLNNNQLQAMPSGVFSG, and TLLRLNLRGNSFTSLPVSGVLD. Residues 563 to 614 form the LRRCT 2 domain; it reads NPWDCTCDVVGMKLWIEQLKVGVLVDEVICKAPKKFAETYMRSIKSELLCPD. Positions 623-632 are enriched in low complexity; it reads PTPSSIQVPS. The interval 623–642 is disordered; the sequence is PTPSSIQVPSRTNAATPAVR. N-linked (GlcNAc...) asparagine glycosylation is present at asparagine 644. A helical transmembrane segment spans residues 665 to 685; it reads VLILSLLLVFIMSVFVAAGLF. Topologically, residues 686 to 957 are cytoplasmic; sequence VLVMKRRKKN…LEKQTTFSQF (272 aa). The segment at 789-844 is disordered; sequence SNHHLQQQPPPPPQQPQQQPPPQMQMQPGEEERRESHHLRSPAYSVSTIEPREDLL. Pro residues predominate over residues 796 to 811; sequence QPPPPPQQPQQQPPPQ.

The protein belongs to the SLITRK family. In terms of tissue distribution, in the adult, significant expression is detected only in the brain. In the embryo, expressed in the subventricular zone, cortical plate, pyramidal layer of hippocampus, thalamus and hypothalamus.

The protein localises to the membrane. Functionally, suppresses neurite outgrowth. The polypeptide is SLIT and NTRK-like protein 5 (Slitrk5) (Mus musculus (Mouse)).